The sequence spans 45 residues: Putative metallothionein-like protein 1B (45 aa).

The protein belongs to the metallothionein superfamily. Type 15 family.

Metallothioneins have a high content of cysteine residues that bind various heavy metals. Confers tolerance to cadmium (Cd) and plays a role in Cd and zinc (Zn) homeostasis. The protein is Putative metallothionein-like protein 1B (MT1B) of Arabidopsis thaliana (Mouse-ear cress).